Consider the following 255-residue polypeptide: Triosephosphate isomerase (255 aa).

Position 9–11 (Asn9–Lys11) interacts with substrate. The Electrophile role is filled by His95. The active-site Proton acceptor is Glu167. Residues Gly173, Ser212, and Gly233–Gly234 contribute to the substrate site.

It belongs to the triosephosphate isomerase family. Homodimer.

The protein localises to the cytoplasm. The enzyme catalyses D-glyceraldehyde 3-phosphate = dihydroxyacetone phosphate. It participates in carbohydrate biosynthesis; gluconeogenesis. Its pathway is carbohydrate degradation; glycolysis; D-glyceraldehyde 3-phosphate from glycerone phosphate: step 1/1. Its function is as follows. Involved in the gluconeogenesis. Catalyzes stereospecifically the conversion of dihydroxyacetone phosphate (DHAP) to D-glyceraldehyde-3-phosphate (G3P). This chain is Triosephosphate isomerase, found in Serratia proteamaculans (strain 568).